Here is a 298-residue protein sequence, read N- to C-terminus: Bifunctional protein FolD (298 aa).

Residues 165-167 (GRS), Ser-190, and Ile-231 each bind NADP(+).

This sequence belongs to the tetrahydrofolate dehydrogenase/cyclohydrolase family. As to quaternary structure, homodimer.

It carries out the reaction (6R)-5,10-methylene-5,6,7,8-tetrahydrofolate + NADP(+) = (6R)-5,10-methenyltetrahydrofolate + NADPH. It catalyses the reaction (6R)-5,10-methenyltetrahydrofolate + H2O = (6R)-10-formyltetrahydrofolate + H(+). It participates in one-carbon metabolism; tetrahydrofolate interconversion. Catalyzes the oxidation of 5,10-methylenetetrahydrofolate to 5,10-methenyltetrahydrofolate and then the hydrolysis of 5,10-methenyltetrahydrofolate to 10-formyltetrahydrofolate. This Prochlorococcus marinus (strain MIT 9312) protein is Bifunctional protein FolD.